The chain runs to 358 residues: Alanine racemase (358 aa).

The active-site Proton acceptor; specific for D-alanine is the lysine 35. The residue at position 35 (lysine 35) is an N6-(pyridoxal phosphate)lysine. A substrate-binding site is contributed by arginine 130. Catalysis depends on tyrosine 255, which acts as the Proton acceptor; specific for L-alanine. Position 303 (methionine 303) interacts with substrate.

It belongs to the alanine racemase family. Requires pyridoxal 5'-phosphate as cofactor.

The catalysed reaction is L-alanine = D-alanine. Its pathway is amino-acid biosynthesis; D-alanine biosynthesis; D-alanine from L-alanine: step 1/1. In terms of biological role, catalyzes the interconversion of L-alanine and D-alanine. May also act on other amino acids. This is Alanine racemase (alr) from Shewanella baltica (strain OS185).